A 524-amino-acid chain; its full sequence is AAA ATPase forming ring-shaped complexes (524 aa).

Positions Met-1–Leu-29 are disordered. Residues Ala-22–Ala-59 are a coiled coil. Position 250 to 255 (Gly-250 to Leu-255) interacts with ATP.

It belongs to the AAA ATPase family. Homohexamer. Assembles into a hexameric ring structure.

This is AAA ATPase forming ring-shaped complexes from Bifidobacterium animalis subsp. lactis (strain BB-12).